A 68-amino-acid chain; its full sequence is UPF0435 protein SA1696 (68 aa).

It belongs to the UPF0435 family.

The polypeptide is UPF0435 protein SA1696 (Staphylococcus aureus (strain N315)).